The following is a 427-amino-acid chain: Carboxyl-terminal-processing protease (427 aa).

The first 31 residues, 1–31, serve as a signal peptide directing secretion; that stretch reads MGKRTRRFWALAFSLLMGALIYLGNTPSALA. A PDZ domain is found at 104–186; it reads NLQVTTTGEL…TKVSLEILSA (83 aa). Catalysis depends on charge relay system residues Ser-313, Asp-324, and Lys-338.

This sequence belongs to the peptidase S41A family.

It localises to the cellular thylakoid lumen. It catalyses the reaction The enzyme shows specific recognition of a C-terminal tripeptide, Xaa-Yaa-Zaa, in which Xaa is preferably Ala or Leu, Yaa is preferably Ala or Tyr, and Zaa is preferably Ala, but then cleaves at a variable distance from the C-terminus. A typical cleavage is -Ala-Ala-|-Arg-Ala-Ala-Lys-Glu-Asn-Tyr-Ala-Leu-Ala-Ala.. Cleavage of the 16 C-terminal residues from the D1 precursor of photosystem II (PSII). This proteolytic processing is necessary to allow the light-driven assembly of the oxygen-evolving cluster (a tetranuclear manganese), which is responsible for photosynthetic water oxidation. The polypeptide is Carboxyl-terminal-processing protease (ctpA) (Synechocystis sp. (strain ATCC 27184 / PCC 6803 / Kazusa)).